Consider the following 297-residue polypeptide: Undecaprenyl-diphosphatase 3 (297 aa).

A run of 6 helical transmembrane segments spans residues 39–59 (PGAA…LIYF), 89–109 (WLVL…QDAI), 118–138 (LIAT…WYAS), 203–223 (FLLA…SIGG), 237–257 (PTIV…AWFL), and 268–288 (FVLY…GGAI).

The protein belongs to the UppP family.

It is found in the cell membrane. The catalysed reaction is di-trans,octa-cis-undecaprenyl diphosphate + H2O = di-trans,octa-cis-undecaprenyl phosphate + phosphate + H(+). Functionally, catalyzes the dephosphorylation of undecaprenyl diphosphate (UPP). Confers resistance to bacitracin. The chain is Undecaprenyl-diphosphatase 3 from Frankia alni (strain DSM 45986 / CECT 9034 / ACN14a).